The sequence spans 69 residues: UPF0434 protein Rmet_0534 (69 aa).

It belongs to the UPF0434 family.

The protein is UPF0434 protein Rmet_0534 of Cupriavidus metallidurans (strain ATCC 43123 / DSM 2839 / NBRC 102507 / CH34) (Ralstonia metallidurans).